Here is a 556-residue protein sequence, read N- to C-terminus: 3-phosphoinositide-dependent protein kinase 1 (556 aa).

Tyrosine 9 is subject to Phosphotyrosine; by SRC and INSR. Serine 25 carries the phosphoserine modification. The tract at residues 26–80 is disordered; it reads PSMVRTQTESSTPPGIPGGSRQGPAMDGTAAEPRPGAGSLQHAQPPPQPRKKRPE. The segment covering 28–38 has biased composition (polar residues); the sequence is MVRTQTESSTP. The 261-residue stretch at 82 to 342 folds into the Protein kinase domain; sequence FKFGKILGEG…YGPLKAHPFF (261 aa). ATP-binding positions include 92 to 94 and lysine 111; that span reads SFS. Positions 113–157 are PIF-pocket; it reads LEKRHIIKENKVPYVTRERDVMSRLDHPFFVKLYFTFQDDEKLYF. Residues 160–162 and glutamate 166 each bind ATP; that span reads SYA. The active-site Proton acceptor is the aspartate 205. ATP-binding residues include glutamate 209 and aspartate 223. Residue serine 241 is modified to Phosphoserine; by autocatalysis. N6-acetyllysine is present on lysine 304. Position 354 is a phosphothreonine; by MELK (threonine 354). A phosphotyrosine; by SRC and INSR mark is found at tyrosine 373 and tyrosine 376. Serine 393 is subject to Phosphoserine. At serine 394 the chain carries Phosphoserine; by MAP3K5. Serine 396 carries the post-translational modification Phosphoserine. Serine 398 carries the post-translational modification Phosphoserine; by MAP3K5. Serine 410 carries the phosphoserine modification. The 92-residue stretch at 459–550 folds into the PH domain; sequence KMGPVDKRKG…EVWRQRYQSH (92 aa). Phosphoserine; by PKC/PRKCQ is present on serine 501. Position 513 is a phosphothreonine; by autocatalysis (threonine 513). The residue at position 529 (serine 529) is a Phosphoserine; by PKC/PRKCQ.

It belongs to the protein kinase superfamily. AGC Ser/Thr protein kinase family. PDPK1 subfamily. As to quaternary structure, homodimer in its autoinhibited state. Active as monomer. Interacts with NPRL2, PPARG, PAK1, PTK2B, GRB14, PKN1 (via C-terminus), STRAP and IKKB. The Tyr-9 phosphorylated form interacts with SRC, RASA1 and CRK (via their SH2 domains). Interacts with SGK3 in a phosphorylation-dependent manner. The tyrosine-phosphorylated form interacts with PTPN6. The Ser-241 phosphorylated form interacts with YWHAH and YWHAQ. Binds INSR in response to insulin. Interacts (via PH domain) with SMAD3, SMAD4 and SMAD7. Interacts with PKN2; the interaction stimulates PDPK1 autophosphorylation, its PI(3,4,5)P3-dependent kinase activity toward 'Ser-473' of AKT1 but also activates its kinase activity toward PRKCD and PRKCZ. Phosphorylation on Ser-241 in the activation loop is required for full activity. PDPK1 itself can autophosphorylate Ser-241, leading to its own activation. Autophosphorylation is inhibited by the apoptotic C-terminus cleavage product of PKN2. Tyr-9 phosphorylation is critical for stabilization of both PDPK1 and the PDPK1/SRC complex via HSP90-mediated protection of PDPK1 degradation. Angiotensin II stimulates the tyrosine phosphorylation of PDPK1 in vascular smooth muscle in a calcium- and SRC-dependent manner. Phosphorylated on Tyr-9, Tyr-373 and Tyr-376 by INSR in response to insulin. Palmitate negatively regulates autophosphorylation at Ser-241 and palmitate-induced phosphorylation at Ser-529 and Ser-501 by PKC/PRKCQ negatively regulates its ability to phosphorylate PKB/AKT1. Phosphorylation at Thr-354 by MELK partially inhibits kinase activity, the inhibition is cooperatively enhanced by phosphorylation at Ser-394 and Ser-398 by MAP3K5. In terms of processing, autophosphorylated; autophosphorylation is inhibited by the apoptotic C-terminus cleavage product of PKN2. Post-translationally, monoubiquitinated in the kinase domain, deubiquitinated by USP4. In terms of tissue distribution, appears to be expressed ubiquitously. The Tyr-9 phosphorylated form is markedly increased in diseased tissue compared with normal tissue from lung, liver, colon and breast.

It is found in the cytoplasm. Its subcellular location is the nucleus. The protein resides in the cell membrane. The protein localises to the cell junction. It localises to the focal adhesion. The enzyme catalyses L-seryl-[protein] + ATP = O-phospho-L-seryl-[protein] + ADP + H(+). It catalyses the reaction L-threonyl-[protein] + ATP = O-phospho-L-threonyl-[protein] + ADP + H(+). Homodimerization regulates its activity by maintaining the kinase in an autoinhibitory conformation. NPRL2 down-regulates its activity by interfering with tyrosine phosphorylation at the Tyr-9, Tyr-373 and Tyr-376 residues. The 14-3-3 protein YWHAQ acts as a negative regulator by association with the residues surrounding the Ser-241 residue. STRAP positively regulates its activity by enhancing its autophosphorylation and by stimulating its dissociation from YWHAQ. SMAD2, SMAD3, SMAD4 and SMAD7 also positively regulate its activity by stimulating its dissociation from YWHAQ. Activated by phosphorylation on Tyr-9, Tyr-373 and Tyr-376 by INSR in response to insulin. Functionally, serine/threonine kinase which acts as a master kinase, phosphorylating and activating a subgroup of the AGC family of protein kinases. Its targets include: protein kinase B (PKB/AKT1, PKB/AKT2, PKB/AKT3), p70 ribosomal protein S6 kinase (RPS6KB1), p90 ribosomal protein S6 kinase (RPS6KA1, RPS6KA2 and RPS6KA3), cyclic AMP-dependent protein kinase (PRKACA), protein kinase C (PRKCD and PRKCZ), serum and glucocorticoid-inducible kinase (SGK1, SGK2 and SGK3), p21-activated kinase-1 (PAK1), TSSK3, protein kinase PKN (PKN1 and PKN2). Plays a central role in the transduction of signals from insulin by providing the activating phosphorylation to PKB/AKT1, thus propagating the signal to downstream targets controlling cell proliferation and survival, as well as glucose and amino acid uptake and storage. Negatively regulates the TGF-beta-induced signaling by: modulating the association of SMAD3 and SMAD7 with TGF-beta receptor, phosphorylating SMAD2, SMAD3, SMAD4 and SMAD7, preventing the nuclear translocation of SMAD3 and SMAD4 and the translocation of SMAD7 from the nucleus to the cytoplasm in response to TGF-beta. Activates PPARG transcriptional activity and promotes adipocyte differentiation. Activates the NF-kappa-B pathway via phosphorylation of IKKB. The tyrosine phosphorylated form is crucial for the regulation of focal adhesions by angiotensin II. Controls proliferation, survival, and growth of developing pancreatic cells. Participates in the regulation of Ca(2+) entry and Ca(2+)-activated K(+) channels of mast cells. Essential for the motility of vascular endothelial cells (ECs) and is involved in the regulation of their chemotaxis. Plays a critical role in cardiac homeostasis by serving as a dual effector for cell survival and beta-adrenergic response. Plays an important role during thymocyte development by regulating the expression of key nutrient receptors on the surface of pre-T cells and mediating Notch-induced cell growth and proliferative responses. Provides negative feedback inhibition to toll-like receptor-mediated NF-kappa-B activation in macrophages. In terms of biological role, catalytically inactive. This is 3-phosphoinositide-dependent protein kinase 1 (PDPK1) from Homo sapiens (Human).